A 137-amino-acid chain; its full sequence is Regulator of cell cycle RGCC (137 aa).

Residues 57 to 116 form a disordered region; that stretch reads LERMKRRSSASVSDSSGFSDSESADSVYRDSFTFSDEKLNSPTNSSPALLPSAVTPRKAK. The span at 65-82 shows a compositional bias: low complexity; that stretch reads SASVSDSSGFSDSESADS. Phosphoserine occurs at positions 67, 69, 71, 75, 91, and 97. The residue at position 111 (Thr111) is a Phosphothreonine.

As to quaternary structure, interacts with CDK1 and PLK1. Interacts with SMAD3.

Its subcellular location is the cytoplasm. The protein localises to the nucleus. It localises to the cytoskeleton. The protein resides in the microtubule organizing center. It is found in the centrosome. Functionally, modulates the activity of cell cycle-specific kinases. Enhances CDK1 activity. May contribute to the regulation of the cell cycle. May inhibit growth of glioma cells by promoting arrest of mitotic progression at the G2/M transition. Fibrogenic factor contributing to the pathogenesis of renal fibrosis through fibroblast activation. The sequence is that of Regulator of cell cycle RGCC (Rgcc) from Mus musculus (Mouse).